Here is a 494-residue protein sequence, read N- to C-terminus: Serine/arginine-rich splicing factor 4 (494 aa).

The RRM 1 domain occupies 2–72; it reads PRVYIGRLSY…ERVIVEHARG (71 aa). Disordered stretches follow at residues 72-95 and 169-494; these read GPRR…GRDK and KIRL…HSRS. Serine 78 and serine 84 each carry phosphoserine. Residues 104–177 enclose the RRM 2 domain; it reads YRLIVENLSS…RKIRLVEDKP (74 aa). Basic residues-rich tracts occupy residues 179–206 and 214–246; these read SRRR…KSRS and SHSK…KKEK. Over residues 247-256 the composition is skewed to basic and acidic residues; it reads SRSPSKEKSR. The span at 257–267 shows a compositional bias: basic residues; the sequence is SRSHSAGKSRS. Residues 268–278 show a composition bias toward basic and acidic residues; sequence KSKDQAEEKIQ. Positions 286-302 are enriched in basic residues; the sequence is PKSRSPSRHKSKSKSRS. 3 positions are modified to phosphoserine: serine 288, serine 290, and serine 292. Over residues 303-327 the composition is skewed to basic and acidic residues; it reads RSQERRVEEEKRGSVSRGRSQEKSL. Composition is skewed to basic residues over residues 328-359 and 367-382; these read RQSR…GRKR and RSRS…KRGS. Positions 411–431 are enriched in basic and acidic residues; sequence VSKEREHAKSESSQREGRGES. Phosphoserine is present on residues serine 431, serine 446, serine 456, serine 458, and serine 460. The segment covering 449–460 has biased composition (low complexity); the sequence is KSKPNLPSESRS. Residues 461–494 show a composition bias toward basic residues; that stretch reads RSKSASKTRSRSKSRSRSASRSPSRSRSRSHSRS.

Belongs to the splicing factor SR family. Found in a pre-mRNA splicing complex with SRSF4/SFRS4, SRSF5/SFRS5, SNRNP70, SNRPA1, SRRM1 and SRRM2. Interacts with PNN. In terms of processing, extensively phosphorylated on serine residues in the RS domain.

The protein resides in the nucleus speckle. In terms of biological role, plays a role in alternative splice site selection during pre-mRNA splicing. Represses the splicing of MAPT/Tau exon 10. In Homo sapiens (Human), this protein is Serine/arginine-rich splicing factor 4 (SRSF4).